A 190-amino-acid polypeptide reads, in one-letter code: Elongation factor P-like protein (190 aa).

This sequence belongs to the elongation factor P family.

The chain is Elongation factor P-like protein from Shigella dysenteriae serotype 1 (strain Sd197).